The chain runs to 67 residues: Large ribosomal subunit protein uL30 (67 aa).

The protein belongs to the universal ribosomal protein uL30 family. As to quaternary structure, part of the 50S ribosomal subunit.

The protein is Large ribosomal subunit protein uL30 of Thermotoga neapolitana (strain ATCC 49049 / DSM 4359 / NBRC 107923 / NS-E).